The chain runs to 359 residues: Gene 58 protein (359 aa).

The next 11 membrane-spanning stretches (helical) occupy residues 12–32 (TMAAFGTGMLGAASFVWCFLF), 45–65 (VDELFFWGSLCVQVMMLFFCF), 75–95 (YLDLICAVNIVALFGCLICLQ), 103–123 (YLPILFSLNLIWLSVWLPVTF), 132–152 (YANAYFQLGFFTATTVHYLLL), 154–174 (FGSVTTSFLFIPFACFLIAGL), 220–240 (LCVVAVMTVGFAVFMTAAGVY), 246–266 (VLKTYLLMFQFGTFCVGGMGY), 271–289 (ATFVYCMTACILMPLVFVL), 296–318 (SVLFLAIFFLFINGVTCETTIML), and 330–350 (IVLSVCLLVNICITLSLNVLY).

Belongs to the herpesviridae BMRF2 family.

The protein resides in the host membrane. In Equine herpesvirus 2 (strain 86/87) (EHV-2), this protein is Gene 58 protein (58).